Reading from the N-terminus, the 298-residue chain is MKVLWAALVVTLLAGCQADVEPELEVQEPAVWQSGQPWELALGRFWDYLRWVQTLSEQVQEELLSSHVTQELTLLMEDTMKEVKAYKSELEQELAPMAEDTKARLSKELQAAQSRLRADMEEVLNRLSQYRGEVQTMMGQSGEELRARLAAHLRKLRKRLLRDVEEVQKRMDVYRAGAQEGAERSVSAIRERMGSLVEEGRLQSLPSQPLRERAQAWGEQMRGRLEKVGSQARDRLEEVREQMEEVRGKVEEQAEAFQARFKSWFEPMMEDMRRQWADLIEKVQVAVGASTAAPSQKS.

A signal peptide spans 1–18; the sequence is MKVLWAALVVTLLAGCQA. Tandem repeats lie at residues 74 to 95, 96 to 117, 118 to 139, 140 to 161, 162 to 183, and 223 to 244. The 8 X 22 AA approximate tandem repeats stretch occupies residues 74–244; sequence LLMEDTMKEV…RLEEVREQME (171 aa). Methionine 137 bears the Methionine sulfoxide mark. Phosphoserine is present on serine 141. The LDL and other lipoprotein receptors binding stretch occupies residues 152-162; that stretch reads HLRKLRKRLLR. 156 to 159 is a heparin binding site; it reads LRKR. A lipid-binding and lipoprotein association region spans residues 204–272; sequence SLPSQPLRER…SWFEPMMEDM (69 aa). 218–225 is a heparin binding site; sequence GEQMRGRL. Positions 260 to 272 are specificity for association with VLDL; the sequence is RFKSWFEPMMEDM.

Belongs to the apolipoprotein A1/A4/E family. As to quaternary structure, homotetramer. May interact with ABCA1; functionally associated with ABCA1 in the biogenesis of HDLs. May interact with APP/A4 amyloid-beta peptide; the interaction is extremely stable in vitro but its physiological significance is unclear. May interact with MAPT. May interact with MAP2. In the cerebrospinal fluid, interacts with secreted SORL1. Interacts with PMEL; this allows the loading of PMEL luminal fragment on ILVs to induce fibril nucleation. Post-translationally, APOE exists as multiple glycosylated and sialylated glycoforms within cells and in plasma. The extent of glycosylation and sialylation are tissue and context specific. In terms of processing, glycated in plasma VLDL. Phosphorylated by FAM20C in the extracellular medium.

The protein resides in the secreted. Its subcellular location is the extracellular space. It localises to the extracellular matrix. The protein localises to the extracellular vesicle. It is found in the endosome. The protein resides in the multivesicular body. APOE is an apolipoprotein, a protein associating with lipid particles, that mainly functions in lipoprotein-mediated lipid transport between organs via the plasma and interstitial fluids. APOE is a core component of plasma lipoproteins and is involved in their production, conversion and clearance. Apolipoproteins are amphipathic molecules that interact both with lipids of the lipoprotein particle core and the aqueous environment of the plasma. As such, APOE associates with chylomicrons, chylomicron remnants, very low density lipoproteins (VLDL) and intermediate density lipoproteins (IDL) but shows a preferential binding to high-density lipoproteins (HDL). It also binds a wide range of cellular receptors including the LDL receptor/LDLR, the LDL receptor-related proteins LRP1, LRP2 and LRP8 and the very low-density lipoprotein receptor/VLDLR that mediate the cellular uptake of the APOE-containing lipoprotein particles. Finally, APOE also has a heparin-binding activity and binds heparan-sulfate proteoglycans on the surface of cells, a property that supports the capture and the receptor-mediated uptake of APOE-containing lipoproteins by cells. A main function of APOE is to mediate lipoprotein clearance through the uptake of chylomicrons, VLDLs, and HDLs by hepatocytes. APOE is also involved in the biosynthesis by the liver of VLDLs as well as their uptake by peripheral tissues ensuring the delivery of triglycerides and energy storage in muscle, heart and adipose tissues. By participating in the lipoprotein-mediated distribution of lipids among tissues, APOE plays a critical role in plasma and tissues lipid homeostasis. APOE is also involved in two steps of reverse cholesterol transport, the HDLs-mediated transport of cholesterol from peripheral tissues to the liver, and thereby plays an important role in cholesterol homeostasis. First, it is functionally associated with ABCA1 in the biogenesis of HDLs in tissues. Second, it is enriched in circulating HDLs and mediates their uptake by hepatocytes. APOE also plays an important role in lipid transport in the central nervous system, regulating neuron survival and sprouting. In Dasyprocta punctata (Central American agouti), this protein is Apolipoprotein E (APOE).